The primary structure comprises 442 residues: uncharacterized protein (442 aa).

[4Fe-4S] cluster contacts are provided by Cys-43, Cys-49, Cys-52, and Cys-130. 4 residues coordinate S-adenosyl-L-methionine: Gln-273, Tyr-302, Glu-323, and Asp-372. Catalysis depends on Cys-399, which acts as the Nucleophile.

It belongs to the class I-like SAM-binding methyltransferase superfamily. RNA M5U methyltransferase family.

This is an uncharacterized protein from Protochlamydia amoebophila (strain UWE25).